A 236-amino-acid polypeptide reads, in one-letter code: Ribosome maturation protein SDO1 homolog (236 aa).

It belongs to the SDO1/SBDS family.

This is Ribosome maturation protein SDO1 homolog from Pyrococcus horikoshii (strain ATCC 700860 / DSM 12428 / JCM 9974 / NBRC 100139 / OT-3).